Here is a 480-residue protein sequence, read N- to C-terminus: Thiamine biosynthesis bifunctional protein ThiM/ThiE (480 aa).

Residues 1 to 287 (MSTLPERVRE…LYVLVSGATP (287 aa)) are hydroxyethylthiazole kinase. Met40 contacts 5-(2-hydroxyethyl)-4-methylthiazole. Positions 116 and 164 each coordinate ATP. Gly191 serves as a coordination point for 5-(2-hydroxyethyl)-4-methylthiazole. The thiamine-phosphate synthase stretch occupies residues 288-480 (PDVLEAVLQA…VRRAKGEVSA (193 aa)). 4-amino-2-methyl-5-(diphosphooxymethyl)pyrimidine is bound by residues 303-307 (QFREK) and Asn335. Mg(2+) contacts are provided by Asp336 and Asp355. Thr374 serves as a coordination point for 4-amino-2-methyl-5-(diphosphooxymethyl)pyrimidine. 400-402 (TPS) serves as a coordination point for 2-[(2R,5Z)-2-carboxy-4-methylthiazol-5(2H)-ylidene]ethyl phosphate. Residue Lys403 participates in 4-amino-2-methyl-5-(diphosphooxymethyl)pyrimidine binding. 2-[(2R,5Z)-2-carboxy-4-methylthiazol-5(2H)-ylidene]ethyl phosphate is bound by residues Gly431 and 451 to 452 (IS).

It in the N-terminal section; belongs to the Thz kinase family. This sequence in the C-terminal section; belongs to the thiamine-phosphate synthase family. Requires Mg(2+) as cofactor.

The catalysed reaction is 5-(2-hydroxyethyl)-4-methylthiazole + ATP = 4-methyl-5-(2-phosphooxyethyl)-thiazole + ADP + H(+). It carries out the reaction 2-[(2R,5Z)-2-carboxy-4-methylthiazol-5(2H)-ylidene]ethyl phosphate + 4-amino-2-methyl-5-(diphosphooxymethyl)pyrimidine + 2 H(+) = thiamine phosphate + CO2 + diphosphate. It catalyses the reaction 2-(2-carboxy-4-methylthiazol-5-yl)ethyl phosphate + 4-amino-2-methyl-5-(diphosphooxymethyl)pyrimidine + 2 H(+) = thiamine phosphate + CO2 + diphosphate. The enzyme catalyses 4-methyl-5-(2-phosphooxyethyl)-thiazole + 4-amino-2-methyl-5-(diphosphooxymethyl)pyrimidine + H(+) = thiamine phosphate + diphosphate. Its pathway is cofactor biosynthesis; thiamine diphosphate biosynthesis; 4-methyl-5-(2-phosphoethyl)-thiazole from 5-(2-hydroxyethyl)-4-methylthiazole: step 1/1. It participates in cofactor biosynthesis; thiamine diphosphate biosynthesis; thiamine phosphate from 4-amino-2-methyl-5-diphosphomethylpyrimidine and 4-methyl-5-(2-phosphoethyl)-thiazole: step 1/1. Its function is as follows. Condenses 4-methyl-5-(beta-hydroxyethyl)thiazole monophosphate (THZ-P) and 2-methyl-4-amino-5-hydroxymethyl pyrimidine pyrophosphate (HMP-PP) to form thiamine monophosphate (TMP). The chain is Thiamine biosynthesis bifunctional protein ThiM/ThiE (thiM/thiE) from Symbiobacterium thermophilum (strain DSM 24528 / JCM 14929 / IAM 14863 / T).